A 135-amino-acid chain; its full sequence is Ribonuclease P protein component 2 (135 aa).

Belongs to the eukaryotic/archaeal RNase P protein component 2 family. Consists of a catalytic RNA component and at least 4-5 protein subunits.

It localises to the cytoplasm. The enzyme catalyses Endonucleolytic cleavage of RNA, removing 5'-extranucleotides from tRNA precursor.. In terms of biological role, part of ribonuclease P, a protein complex that generates mature tRNA molecules by cleaving their 5'-ends. The protein is Ribonuclease P protein component 2 of Methanosarcina barkeri (strain Fusaro / DSM 804).